A 163-amino-acid polypeptide reads, in one-letter code: Staphylokinase (163 aa).

Residues 1–27 form the signal peptide; the sequence is MLKRSLLFLTVLLLLFSFSSITNEVSA.

It belongs to the staphylokinase family.

The protein resides in the secreted. In terms of biological role, potent plasminogen activator that converts plasminogen into plasmin. It forms a 1:1 complex with plasmin, which in turn activates other plasminogen molecules. This is Staphylokinase (sak) from Staphylococcus aureus (Bacteriophage P42D).